The following is a 262-amino-acid chain: Nurim (262 aa).

Residues 1 to 4 (MAPA) are Nuclear-facing. A helical transmembrane segment spans residues 5–28 (LLLIPAALASFILAFGTGVEFVRF). Residues 29 to 58 (TSLRPLLGGIPESGGPDARQGWLAALQDRS) are Perinuclear space-facing. The helical transmembrane segment at 59-80 (ILAPLAWDLGLLLLFVGQHSLM) threads the bilayer. Over 81 to 97 (AAERVKAWTSRYFGVLQ) the chain is Nuclear. Residues 98–114 (RSLYVACTALALQLVMR) form a helical membrane-spanning segment. At 115–133 (YWEPIPKGPVLWEARAEPW) the chain is on the perinuclear space side. A helical transmembrane segment spans residues 134-164 (ATWVPLLCFVLHVISWLLIFSILLVFDYAEL). Topologically, residues 165 to 191 (MGLKQVYYHVLGLGEPLALKSPRALRL) are nuclear. A helical transmembrane segment spans residues 192–210 (FSHLRHPVCVELLTVLWVV). Topologically, residues 211-216 (PTLGTD) are perinuclear space. The chain crosses the membrane as a helical span at residues 217 to 234 (RLLLAFLLTLYLGLAHGL). Residues 235 to 262 (DQQDLRYLRAQLQRKLHLLSRPQDGEAE) are Nuclear-facing.

The protein belongs to the nurim family.

It is found in the nucleus inner membrane. This chain is Nurim (NRM), found in Homo sapiens (Human).